The primary structure comprises 141 residues: Large ribosomal subunit protein uL11 (141 aa).

It belongs to the universal ribosomal protein uL11 family. In terms of assembly, part of the ribosomal stalk of the 50S ribosomal subunit. Interacts with L10 and the large rRNA to form the base of the stalk. L10 forms an elongated spine to which L12 dimers bind in a sequential fashion forming a multimeric L10(L12)X complex. Post-translationally, one or more lysine residues are methylated.

In terms of biological role, forms part of the ribosomal stalk which helps the ribosome interact with GTP-bound translation factors. In Lactobacillus johnsonii (strain CNCM I-12250 / La1 / NCC 533), this protein is Large ribosomal subunit protein uL11.